Here is a 277-residue protein sequence, read N- to C-terminus: Large ribosomal subunit protein uL2 (277 aa).

Positions 222–277 are disordered; it reads GSVMNPNDHPHGGGEGKAPVGRKAPSTPWGKPALGLKTRNKKAKSDKLIVRRRNQK.

It belongs to the universal ribosomal protein uL2 family. In terms of assembly, part of the 50S ribosomal subunit. Forms a bridge to the 30S subunit in the 70S ribosome.

One of the primary rRNA binding proteins. Required for association of the 30S and 50S subunits to form the 70S ribosome, for tRNA binding and peptide bond formation. It has been suggested to have peptidyltransferase activity; this is somewhat controversial. Makes several contacts with the 16S rRNA in the 70S ribosome. The sequence is that of Large ribosomal subunit protein uL2 from Streptococcus agalactiae serotype Ia (strain ATCC 27591 / A909 / CDC SS700).